We begin with the raw amino-acid sequence, 166 residues long: Small ribosomal subunit protein uS5 (166 aa).

In terms of domain architecture, S5 DRBM spans 11 to 74 (LIEKLITVNR…EKARRNMVTV (64 aa)).

The protein belongs to the universal ribosomal protein uS5 family. In terms of assembly, part of the 30S ribosomal subunit. Contacts proteins S4 and S8.

Functionally, with S4 and S12 plays an important role in translational accuracy. In terms of biological role, located at the back of the 30S subunit body where it stabilizes the conformation of the head with respect to the body. In Idiomarina loihiensis (strain ATCC BAA-735 / DSM 15497 / L2-TR), this protein is Small ribosomal subunit protein uS5.